A 308-amino-acid polypeptide reads, in one-letter code: Isoaspartyl peptidase/L-asparaginase (308 aa).

Position 1 is an N-acetylmethionine (methionine 1). Threonine 168 (nucleophile) is an active-site residue. Substrate-binding positions include 196–199 (RVGD) and 219–222 (TGHG).

Belongs to the Ntn-hydrolase family. In terms of assembly, heterodimer of an alpha and beta chain produced by autocleavage. This heterodimer may then dimerize in turn, giving rise to a heterotetramer. In terms of processing, cleaved into an alpha and beta chain by autocatalysis; this activates the enzyme. The N-terminal residue of the beta subunit is responsible for the nucleophile hydrolase activity.

The protein localises to the cytoplasm. The catalysed reaction is L-asparagine + H2O = L-aspartate + NH4(+). It carries out the reaction Cleavage of a beta-linked Asp residue from the N-terminus of a polypeptide.. Has both L-asparaginase and beta-aspartyl peptidase activity. May be involved in the production of L-aspartate, which can act as an excitatory neurotransmitter in some brain regions. Is highly active with L-Asp beta-methyl ester. Besides, has catalytic activity toward beta-aspartyl dipeptides and their methyl esters, including beta-L-Asp-L-Phe, beta-L-Asp-L-Phe methyl ester (aspartame), beta-L-Asp-L-Ala, beta-L-Asp-L-Leu and beta-L-Asp-L-Lys. Does not have aspartylglucosaminidase activity and is inactive toward GlcNAc-L-Asn. Likewise, has no activity toward glutamine. This Bos taurus (Bovine) protein is Isoaspartyl peptidase/L-asparaginase (ASRGL1).